The chain runs to 364 residues: MLIFPLINDTSRKIIHIDMDAFFAAVEERDNPALKGKPVVIGKDPRETGGRGVVSTCNYEARKYGIHSAMSSKEAYERCPKAIFISGNYEKYRTVGDQIRRIFKRYTDLVEPMSIDEAYLDVTDNKLGIKSAVKIAKLIQHDIWKEVGLTCSAGVSYNKFLAKLASDFEKPHGLTLVLKEDALCFLAKLPIEKFHGVGKKSVEKLHDMGIYTGQDLLAVPEMTLIDHFGRFGFDLYRKARGISNSPVKSDRIRKSIGSERTYAKLLYQETDIKAEISKNAKRVAALLQDHKKLGKTIVLKVRYADFTTLTKRVTLPELTRNAAQIEQVAGDIFDSLSENPAGIRLLGVTMTNLEDKVADISLDL.

Residues 14–198 (IIHIDMDAFF…LPIEKFHGVG (185 aa)) enclose the UmuC domain. Mg(2+)-binding residues include Asp-18 and Asp-116. Glu-117 is a catalytic residue.

The protein belongs to the DNA polymerase type-Y family. As to quaternary structure, monomer. The cofactor is Mg(2+).

The protein resides in the cytoplasm. The enzyme catalyses DNA(n) + a 2'-deoxyribonucleoside 5'-triphosphate = DNA(n+1) + diphosphate. Its function is as follows. Poorly processive, error-prone DNA polymerase involved in untargeted mutagenesis. Copies undamaged DNA at stalled replication forks, which arise in vivo from mismatched or misaligned primer ends. These misaligned primers can be extended by PolIV. Exhibits no 3'-5' exonuclease (proofreading) activity. May be involved in translesional synthesis, in conjunction with the beta clamp from PolIII. This Streptococcus pyogenes serotype M18 (strain MGAS8232) protein is DNA polymerase IV.